The primary structure comprises 228 residues: Uracil-DNA glycosylase (228 aa).

Catalysis depends on D64, which acts as the Proton acceptor.

This sequence belongs to the uracil-DNA glycosylase (UDG) superfamily. UNG family.

It localises to the cytoplasm. The enzyme catalyses Hydrolyzes single-stranded DNA or mismatched double-stranded DNA and polynucleotides, releasing free uracil.. Functionally, excises uracil residues from the DNA which can arise as a result of misincorporation of dUMP residues by DNA polymerase or due to deamination of cytosine. This chain is Uracil-DNA glycosylase, found in Pectobacterium atrosepticum (strain SCRI 1043 / ATCC BAA-672) (Erwinia carotovora subsp. atroseptica).